The sequence spans 100 residues: Putative pterin-4-alpha-carbinolamine dehydratase (100 aa).

Belongs to the pterin-4-alpha-carbinolamine dehydratase family.

The enzyme catalyses (4aS,6R)-4a-hydroxy-L-erythro-5,6,7,8-tetrahydrobiopterin = (6R)-L-erythro-6,7-dihydrobiopterin + H2O. This Bradyrhizobium diazoefficiens (strain JCM 10833 / BCRC 13528 / IAM 13628 / NBRC 14792 / USDA 110) protein is Putative pterin-4-alpha-carbinolamine dehydratase.